An 87-amino-acid polypeptide reads, in one-letter code: Cytochrome c oxidase subunit 6B1 (87 aa).

One can recognise a CHCH domain in the interval 28–74 (TRNCWQNYLDFHRCQKAMTTKGGNVSVCEWYQRVYQSLCPTSWVTDW). The Cx9C motif signature appears at 31-41 (CWQNYLDFHRC). Intrachain disulfides connect Cys31–Cys66 and Cys41–Cys55. Positions 55-66 (CEWYQRVYQSLC) match the Cx10C motif motif.

The protein localises to the mitochondrion intermembrane space. Its function is as follows. Connects the two COX monomers into the physiological dimeric form. This Macaca fascicularis (Crab-eating macaque) protein is Cytochrome c oxidase subunit 6B1 (COX6B1).